A 356-amino-acid chain; its full sequence is D-alanine--D-alanine ligase (356 aa).

The ATP-grasp domain occupies 134-339; sequence KQLFATRGLP…YSELITDLIN (206 aa). Residue 167 to 222 coordinates ATP; the sequence is EGKLTYPVFVKPANLGSSVGISKCTDSETLIHGIEEALQFDRKLVIEQGVNAREVE. Mg(2+)-binding residues include Asp-293, Glu-306, and Asn-308.

It belongs to the D-alanine--D-alanine ligase family. It depends on Mg(2+) as a cofactor. Mn(2+) is required as a cofactor.

Its subcellular location is the cytoplasm. The enzyme catalyses 2 D-alanine + ATP = D-alanyl-D-alanine + ADP + phosphate + H(+). Its pathway is cell wall biogenesis; peptidoglycan biosynthesis. Its function is as follows. Cell wall formation. The chain is D-alanine--D-alanine ligase from Macrococcus caseolyticus (strain JCSC5402) (Macrococcoides caseolyticum).